A 282-amino-acid polypeptide reads, in one-letter code: Putative hydrolase BamMC406_5393 (282 aa).

Mg(2+) contacts are provided by Glu124, Glu126, and Asp155.

The protein belongs to the FAH family. The cofactor is Mg(2+).

The sequence is that of Putative hydrolase BamMC406_5393 from Burkholderia ambifaria (strain MC40-6).